Here is a 221-residue protein sequence, read N- to C-terminus: Chalcone--flavanone isomerase 2 (221 aa).

The substrate site is built by T50, N115, and S192.

The protein belongs to the chalcone isomerase family.

It catalyses the reaction a chalcone = a flavanone.. It participates in secondary metabolite biosynthesis; flavonoid biosynthesis. Functionally, catalyzes the intramolecular cyclization of bicyclic chalcones into tricyclic (S)-flavanones. Responsible for the isomerization of 4,2',4',6'-tetrahydroxychalcone (also termed chalcone) into naringenin. The sequence is that of Chalcone--flavanone isomerase 2 (CHI2) from Lotus japonicus (Lotus corniculatus var. japonicus).